Reading from the N-terminus, the 95-residue chain is Large ribosomal subunit protein bL21 (95 aa).

Belongs to the bacterial ribosomal protein bL21 family. Part of the 50S ribosomal subunit. Contacts protein L20.

Functionally, this protein binds to 23S rRNA in the presence of protein L20. The protein is Large ribosomal subunit protein bL21 of Rubrobacter xylanophilus (strain DSM 9941 / JCM 11954 / NBRC 16129 / PRD-1).